Reading from the N-terminus, the 639-residue chain is NADP-dependent malic enzyme, chloroplastic (639 aa).

The N-terminal 49 residues, M1–R49, are a transit peptide targeting the chloroplast. The disordered stretch occupies residues A15–T34. Residue Y187 is the Proton donor of the active site. R240 provides a ligand contact to NAD(+). Residue K258 is the Proton acceptor of the active site. A divalent metal cation is bound by residues E330, D331, and D354. D354 lines the NAD(+) pocket. L383–A399 provides a ligand contact to NADP(+). An NAD(+)-binding site is contributed by N495.

Belongs to the malic enzymes family. Homotetramer. Mg(2+) serves as cofactor. It depends on Mn(2+) as a cofactor.

The protein localises to the plastid. It localises to the chloroplast. The enzyme catalyses (S)-malate + NADP(+) = pyruvate + CO2 + NADPH. The catalysed reaction is oxaloacetate + H(+) = pyruvate + CO2. It functions in the pathway photosynthesis; C4 acid pathway. Functionally, the chloroplastic ME isoform decarboxylates malate shuttled from neighboring mesophyll cells. The CO(2) released is then refixed by ribulose-bisphosphate carboxylase. This pathway eliminates the photorespiratory loss of CO(2) that occurs in most plants. The polypeptide is NADP-dependent malic enzyme, chloroplastic (ME6) (Oryza sativa subsp. japonica (Rice)).